The sequence spans 984 residues: Shutoff protein (984 aa).

The disordered stretch occupies residues 131-231; it reads GVAAESDPSD…DLERDALVAP (101 aa). Over residues 137–147 the composition is skewed to acidic residues; the sequence is DPSDDEPDPEP. Residues 148–159 are compositionally biased toward basic and acidic residues; the sequence is EYDHREADHDSD. Over residues 176–186 the composition is skewed to acidic residues; that stretch reads VDEEPQDDSPS. Residues 190–202 are compositionally biased toward polar residues; the sequence is TASTVIEEAQTSA. Residues 205–216 show a composition bias toward basic and acidic residues; sequence DSHDDDTHRDDG. The interval 411 to 476 is binding to host EIF4G; that stretch reads LMETLLQPFA…AVRYTATLEL (66 aa). Residues 479 to 597 enclose the RRM domain; it reads RVFREPSMVK…RLYSLPNPTA (119 aa). 2 disordered regions span residues 810–853 and 876–984; these read GVYK…GNRA and KVGP…RQEE. A Phosphotyrosine; by host modification is found at Tyr812. Over residues 913–923 the composition is skewed to basic residues; it reads AGGRRFGRRNT. Over residues 945 to 958 the composition is skewed to low complexity; it reads RGQQGEHPTTSPSA.

The protein belongs to the adenoviridae shutoff protein family. In terms of assembly, monomer. Interacts with hexon protein; this interaction allows chaperoning and trimerization of hexon proteins. Interacts (via N-terminus) with host initiation factor EIF4G (via C-terminus). Interacts (via RRM domain) with viral mRNAs that contain the tripartite leader; this interaction allows ribosome shunting and expression of viral late mRNAs. In terms of processing, might be cleaved by the viral protease. Post-translationally, phosphorylated. Tyrosine phosphorylation enhances preferential binding to tripartite leader mRNAs and allows ribosome shunting. Methylated. Asymmetric dimethylation by host PRMT1 of the Arg/Gly-rich region may regulate shutoff protein binding to hexon and promote the capsid assembly in the nucleus.

It localises to the host cytoplasm. In terms of biological role, protein that inhibits host translation while promoting late viral translation by ribosome shunting. Blocks host cap-dependent translation by binding to eIF4G, displacing MKNK1 from cap initiation complexes and preventing EIF4E phosphorylation. Binds to the tripartite leader sequence of viral late mRNAs and recruits host eIF4G, PABPC1/poly-A binding protein and 40S ribosomes subunits on viral mRNAs, allowing ribosome shunting and efficient translation of late viral mRNAs even though conventional translation via ribosome scanning from the cap has been shut off in the host cell. During assembly, acts as a chaperone protein that helps hexon proteins assembly into trimers. The polypeptide is Shutoff protein (Galliformes (FAdV-1)).